Reading from the N-terminus, the 184-residue chain is Large ribosomal subunit protein uL6 (184 aa).

It belongs to the universal ribosomal protein uL6 family. In terms of assembly, part of the 50S ribosomal subunit.

Its function is as follows. This protein binds to the 23S rRNA, and is important in its secondary structure. It is located near the subunit interface in the base of the L7/L12 stalk, and near the tRNA binding site of the peptidyltransferase center. This Aster yellows witches'-broom phytoplasma (strain AYWB) protein is Large ribosomal subunit protein uL6.